The sequence spans 176 residues: NAD(P)H-quinone oxidoreductase subunit 6, chloroplastic (176 aa).

A run of 5 helical transmembrane segments spans residues Phe10–Thr30, Ile33–Ala53, Ala61–Ile81, Leu92–Ile112, and Phe152–Ala172.

This sequence belongs to the complex I subunit 6 family. NDH is composed of at least 16 different subunits, 5 of which are encoded in the nucleus.

Its subcellular location is the plastid. The protein localises to the chloroplast thylakoid membrane. The catalysed reaction is a plastoquinone + NADH + (n+1) H(+)(in) = a plastoquinol + NAD(+) + n H(+)(out). It catalyses the reaction a plastoquinone + NADPH + (n+1) H(+)(in) = a plastoquinol + NADP(+) + n H(+)(out). Functionally, NDH shuttles electrons from NAD(P)H:plastoquinone, via FMN and iron-sulfur (Fe-S) centers, to quinones in the photosynthetic chain and possibly in a chloroplast respiratory chain. The immediate electron acceptor for the enzyme in this species is believed to be plastoquinone. Couples the redox reaction to proton translocation, and thus conserves the redox energy in a proton gradient. The polypeptide is NAD(P)H-quinone oxidoreductase subunit 6, chloroplastic (ndhG) (Fagopyrum esculentum subsp. ancestrale (Wild buckwheat)).